A 318-amino-acid chain; its full sequence is 4-hydroxy-3-methylbut-2-enyl diphosphate reductase (318 aa).

Residue Cys12 coordinates [4Fe-4S] cluster. Residues His41 and His74 each coordinate (2E)-4-hydroxy-3-methylbut-2-enyl diphosphate. Dimethylallyl diphosphate is bound by residues His41 and His74. His41 and His74 together coordinate isopentenyl diphosphate. Cys96 is a [4Fe-4S] cluster binding site. His124 serves as a coordination point for (2E)-4-hydroxy-3-methylbut-2-enyl diphosphate. His124 contributes to the dimethylallyl diphosphate binding site. His124 contributes to the isopentenyl diphosphate binding site. The Proton donor role is filled by Glu126. (2E)-4-hydroxy-3-methylbut-2-enyl diphosphate is bound at residue Thr168. Cys198 is a binding site for [4Fe-4S] cluster. Residues Ser226, Ser227, Asn228, and Ser270 each coordinate (2E)-4-hydroxy-3-methylbut-2-enyl diphosphate. 4 residues coordinate dimethylallyl diphosphate: Ser226, Ser227, Asn228, and Ser270. Isopentenyl diphosphate is bound by residues Ser226, Ser227, Asn228, and Ser270.

Belongs to the IspH family. Requires [4Fe-4S] cluster as cofactor.

It catalyses the reaction isopentenyl diphosphate + 2 oxidized [2Fe-2S]-[ferredoxin] + H2O = (2E)-4-hydroxy-3-methylbut-2-enyl diphosphate + 2 reduced [2Fe-2S]-[ferredoxin] + 2 H(+). The catalysed reaction is dimethylallyl diphosphate + 2 oxidized [2Fe-2S]-[ferredoxin] + H2O = (2E)-4-hydroxy-3-methylbut-2-enyl diphosphate + 2 reduced [2Fe-2S]-[ferredoxin] + 2 H(+). The protein operates within isoprenoid biosynthesis; dimethylallyl diphosphate biosynthesis; dimethylallyl diphosphate from (2E)-4-hydroxy-3-methylbutenyl diphosphate: step 1/1. It functions in the pathway isoprenoid biosynthesis; isopentenyl diphosphate biosynthesis via DXP pathway; isopentenyl diphosphate from 1-deoxy-D-xylulose 5-phosphate: step 6/6. Its function is as follows. Catalyzes the conversion of 1-hydroxy-2-methyl-2-(E)-butenyl 4-diphosphate (HMBPP) into a mixture of isopentenyl diphosphate (IPP) and dimethylallyl diphosphate (DMAPP). Acts in the terminal step of the DOXP/MEP pathway for isoprenoid precursor biosynthesis. The chain is 4-hydroxy-3-methylbut-2-enyl diphosphate reductase from Psychrobacter sp. (strain PRwf-1).